Consider the following 289-residue polypeptide: Proteasome subunit beta (289 aa).

Residues 1–59 constitute a propeptide, removed in mature form; by autocatalysis; sequence MEHTPRNAGFALPAAYMSTMTSSFIDFLKAEAPDLLPRARVENMPAVPGGGSAFEPPHG. Catalysis depends on Thr-60, which acts as the Nucleophile.

The protein belongs to the peptidase T1B family. In terms of assembly, the 20S proteasome core is composed of 14 alpha and 14 beta subunits that assemble into four stacked heptameric rings, resulting in a barrel-shaped structure. The two inner rings, each composed of seven catalytic beta subunits, are sandwiched by two outer rings, each composed of seven alpha subunits. The catalytic chamber with the active sites is on the inside of the barrel. Has a gated structure, the ends of the cylinder being occluded by the N-termini of the alpha-subunits. Is capped by the proteasome-associated ATPase, ARC.

It localises to the cytoplasm. The enzyme catalyses Cleavage of peptide bonds with very broad specificity.. It functions in the pathway protein degradation; proteasomal Pup-dependent pathway. Its activity is regulated as follows. The formation of the proteasomal ATPase ARC-20S proteasome complex, likely via the docking of the C-termini of ARC into the intersubunit pockets in the alpha-rings, may trigger opening of the gate for substrate entry. Interconversion between the open-gate and close-gate conformations leads to a dynamic regulation of the 20S proteasome proteolysis activity. In terms of biological role, component of the proteasome core, a large protease complex with broad specificity involved in protein degradation. The polypeptide is Proteasome subunit beta (Saccharomonospora viridis (strain ATCC 15386 / DSM 43017 / JCM 3036 / CCUG 5913 / NBRC 12207 / NCIMB 9602 / P101) (Thermoactinomyces viridis)).